The sequence spans 166 residues: Large ribosomal subunit protein uL10 (166 aa).

It belongs to the universal ribosomal protein uL10 family. Part of the ribosomal stalk of the 50S ribosomal subunit. The N-terminus interacts with L11 and the large rRNA to form the base of the stalk. The C-terminus forms an elongated spine to which L12 dimers bind in a sequential fashion forming a multimeric L10(L12)X complex.

Functionally, forms part of the ribosomal stalk, playing a central role in the interaction of the ribosome with GTP-bound translation factors. This Ureaplasma parvum serovar 3 (strain ATCC 27815 / 27 / NCTC 11736) protein is Large ribosomal subunit protein uL10.